Consider the following 373-residue polypeptide: UDP-3-O-acylglucosamine N-acyltransferase 2 (373 aa).

Catalysis depends on His-239, which acts as the Proton acceptor. The disordered stretch occupies residues 345 to 373 (KTNGKSGQADAPPKVALECHGTTGDAPQG).

Belongs to the transferase hexapeptide repeat family. LpxD subfamily. As to quaternary structure, homotrimer.

The catalysed reaction is a UDP-3-O-[(3R)-3-hydroxyacyl]-alpha-D-glucosamine + a (3R)-hydroxyacyl-[ACP] = a UDP-2-N,3-O-bis[(3R)-3-hydroxyacyl]-alpha-D-glucosamine + holo-[ACP] + H(+). Its pathway is bacterial outer membrane biogenesis; LPS lipid A biosynthesis. In terms of biological role, catalyzes the N-acylation of UDP-3-O-acylglucosamine using 3-hydroxyacyl-ACP as the acyl donor. Is involved in the biosynthesis of lipid A, a phosphorylated glycolipid that anchors the lipopolysaccharide to the outer membrane of the cell. This chain is UDP-3-O-acylglucosamine N-acyltransferase 2, found in Gloeobacter violaceus (strain ATCC 29082 / PCC 7421).